We begin with the raw amino-acid sequence, 135 residues long: Large ribosomal subunit protein eL32 (135 aa).

A Glycyl lysine isopeptide (Lys-Gly) (interchain with G-Cter in SUMO2) cross-link involves residue K9. K50 bears the N6-succinyllysine mark. S62 is subject to Phosphoserine.

This sequence belongs to the eukaryotic ribosomal protein eL32 family. As to quaternary structure, component of the large ribosomal subunit.

It is found in the cytoplasm. Component of the large ribosomal subunit. The ribosome is a large ribonucleoprotein complex responsible for the synthesis of proteins in the cell. This chain is Large ribosomal subunit protein eL32 (RPL32), found in Oryctolagus cuniculus (Rabbit).